We begin with the raw amino-acid sequence, 351 residues long: Tryptophan--tRNA ligase 2 (351 aa).

Residues methionine 1–arginine 24 are disordered. Residues proline 9–arginine 24 are compositionally biased toward low complexity. The 'HIGH' region motif lies at proline 31–histidine 39. A 'KMSKS' region motif is present at residues lysine 215–serine 219. Residue lysine 218 coordinates ATP.

This sequence belongs to the class-I aminoacyl-tRNA synthetase family. As to quaternary structure, homodimer. Forms a complex with nos; one homodimer of trpS2 binds one homodimer of nos.

It catalyses the reaction tRNA(Trp) + L-tryptophan + ATP = L-tryptophyl-tRNA(Trp) + AMP + diphosphate + H(+). Functionally, catalyzes the formation of 5'adenyl-Trp and tRNA(Trp) but with 5-fold less activity than TrpRS. Increases the solubility of the nitric oxide synthase oxygenase (nos), as well as its affinity for substrate L-arginine and its nitric-oxide synthase activity. The complex between trpS2 and nos catalyzes the regioselective nitration of tryptophan at the 4-position. The sequence is that of Tryptophan--tRNA ligase 2 (trpS2) from Deinococcus radiodurans (strain ATCC 13939 / DSM 20539 / JCM 16871 / CCUG 27074 / LMG 4051 / NBRC 15346 / NCIMB 9279 / VKM B-1422 / R1).